Here is a 372-residue protein sequence, read N- to C-terminus: Aminomethyltransferase (372 aa).

It belongs to the GcvT family. The glycine cleavage system is composed of four proteins: P, T, L and H.

The enzyme catalyses N(6)-[(R)-S(8)-aminomethyldihydrolipoyl]-L-lysyl-[protein] + (6S)-5,6,7,8-tetrahydrofolate = N(6)-[(R)-dihydrolipoyl]-L-lysyl-[protein] + (6R)-5,10-methylene-5,6,7,8-tetrahydrofolate + NH4(+). Its function is as follows. The glycine cleavage system catalyzes the degradation of glycine. The polypeptide is Aminomethyltransferase (Streptomyces coelicolor (strain ATCC BAA-471 / A3(2) / M145)).